The primary structure comprises 291 residues: Phosphate import ATP-binding protein PstB (291 aa).

An ABC transporter domain is found at 45 to 286; it reads YSTQNLDLWY…PADKQTEDYI (242 aa). ATP is bound at residue 77 to 84; sequence GPSGCGKS.

It belongs to the ABC transporter superfamily. Phosphate importer (TC 3.A.1.7) family. The complex is composed of two ATP-binding proteins (PstB), two transmembrane proteins (PstC and PstA) and a solute-binding protein (PstS).

The protein resides in the cell membrane. It catalyses the reaction phosphate(out) + ATP + H2O = ADP + 2 phosphate(in) + H(+). Its function is as follows. Part of the ABC transporter complex PstSACB involved in phosphate import. Responsible for energy coupling to the transport system. The protein is Phosphate import ATP-binding protein PstB of Staphylococcus epidermidis (strain ATCC 12228 / FDA PCI 1200).